A 310-amino-acid polypeptide reads, in one-letter code: AMMECR1-like protein (310 aa).

The segment at 26–95 (LSGSGTHSHG…LSPLPRPNGT (70 aa)) is disordered. Polar residues predominate over residues 28–66 (GSGTHSHGNQSTTVPGSSSGPLQNHQHVDSSSGRENVSD). Phosphoserine is present on S74. Residues 97-291 (NTTKNLVVTA…ISYAEYIASR (195 aa)) enclose the AMMECR1 domain.

This Homo sapiens (Human) protein is AMMECR1-like protein (AMMECR1L).